We begin with the raw amino-acid sequence, 319 residues long: Protein-methionine-sulfoxide reductase catalytic subunit MsrP (319 aa).

The tat-type signal signal peptide spans 1–54 (MSSFKPSRFSTARLTGDAVTPKSIYLRRREFMIGLGAIAATGAASSAFADPLEA). Mo-molybdopterin contacts are provided by residues Asn75, 78–79 (YE), Cys133, Asn218, Arg223, and 234–236 (GIK).

This sequence belongs to the MsrP family. In terms of assembly, heterodimer of a catalytic subunit (MsrP) and a heme-binding subunit (MsrQ). It depends on Mo-molybdopterin as a cofactor. Post-translationally, predicted to be exported by the Tat system. The position of the signal peptide cleavage has not been experimentally proven.

Its subcellular location is the periplasm. It catalyses the reaction L-methionyl-[protein] + a quinone + H2O = L-methionyl-(S)-S-oxide-[protein] + a quinol. The catalysed reaction is L-methionyl-[protein] + a quinone + H2O = L-methionyl-(R)-S-oxide-[protein] + a quinol. In terms of biological role, part of the MsrPQ system that repairs oxidized periplasmic proteins containing methionine sulfoxide residues (Met-O), using respiratory chain electrons. Thus protects these proteins from oxidative-stress damage caused by reactive species of oxygen and chlorine generated by the host defense mechanisms. MsrPQ is essential for the maintenance of envelope integrity under bleach stress, rescuing a wide series of structurally unrelated periplasmic proteins from methionine oxidation. The catalytic subunit MsrP is non-stereospecific, being able to reduce both (R-) and (S-) diastereoisomers of methionine sulfoxide. This is Protein-methionine-sulfoxide reductase catalytic subunit MsrP from Brucella melitensis biotype 1 (strain ATCC 23456 / CCUG 17765 / NCTC 10094 / 16M).